A 383-amino-acid chain; its full sequence is 8-amino-7-oxononanoate synthase (383 aa).

Arginine 21 contacts substrate. Position 108-109 (108-109) interacts with pyridoxal 5'-phosphate; the sequence is GY. Position 133 (histidine 133) interacts with substrate. Pyridoxal 5'-phosphate contacts are provided by serine 179, histidine 207, and threonine 233. Lysine 236 carries the post-translational modification N6-(pyridoxal phosphate)lysine. A substrate-binding site is contributed by threonine 350.

The protein belongs to the class-II pyridoxal-phosphate-dependent aminotransferase family. BioF subfamily. Homodimer. Pyridoxal 5'-phosphate serves as cofactor.

It carries out the reaction 6-carboxyhexanoyl-[ACP] + L-alanine + H(+) = (8S)-8-amino-7-oxononanoate + holo-[ACP] + CO2. Its pathway is cofactor biosynthesis; biotin biosynthesis. In terms of biological role, catalyzes the decarboxylative condensation of pimeloyl-[acyl-carrier protein] and L-alanine to produce 8-amino-7-oxononanoate (AON), [acyl-carrier protein], and carbon dioxide. This is 8-amino-7-oxononanoate synthase from Photorhabdus laumondii subsp. laumondii (strain DSM 15139 / CIP 105565 / TT01) (Photorhabdus luminescens subsp. laumondii).